A 194-amino-acid polypeptide reads, in one-letter code: Inosine triphosphate pyrophosphatase (194 aa).

Thr10–Lys15 is an ITP binding site. Glu37 contributes to the Mg(2+) binding site. ITP-binding positions include Lys49, Asp65 to Val66, Lys82, Phe142 to Asp145, Lys166, and His171 to Arg172.

The protein belongs to the HAM1 NTPase family. As to quaternary structure, homodimer. Requires Mg(2+) as cofactor. Mn(2+) serves as cofactor.

The protein resides in the cytoplasm. The catalysed reaction is ITP + H2O = IMP + diphosphate + H(+). It catalyses the reaction dITP + H2O = dIMP + diphosphate + H(+). It carries out the reaction XTP + H2O = XMP + diphosphate + H(+). Pyrophosphatase that hydrolyzes non-canonical purine nucleotides such as inosine triphosphate (ITP), deoxyinosine triphosphate (dITP) or xanthosine 5'-triphosphate (XTP) to their respective monophosphate derivatives. The enzyme does not distinguish between the deoxy- and ribose forms. Probably excludes non-canonical purines from RNA and DNA precursor pools, thus preventing their incorporation into RNA and DNA and avoiding chromosomal lesions. The sequence is that of Inosine triphosphate pyrophosphatase from Giardia intestinalis (strain ATCC 50803 / WB clone C6) (Giardia lamblia).